Reading from the N-terminus, the 621-residue chain is Probable potassium transport system protein Kup 2 (621 aa).

12 helical membrane passes run 9–29 (MAGLTLAALGVVYGDIGTSPL), 48–68 (IFGILSLIFWSLIFVVSVKYV), 101–121 (IVLLGLFGAALFYGDAIITPA), 136–156 (SGMEAYVLPMAVGVLVGLFLL), 164–184 (VGLMFGPVMMVWFAILGILGL), 210–230 (GFHAFLTLGSVVLALTGAEAL), 246–266 (WFSLVLPGLGLNYFGQGALLM), 275–295 (PFFLLAPDWALLPMIALATLA), 336–356 (IYMPFINWALLVAVLVVVLTF), 364–384 (AAYGIAVTGTMLITTMLFFVV), 393–413 (LPLALGITLLFGVIDTAFFAA), and 418–438 (VADGGWLPLVMGMAIFTLMST).

This sequence belongs to the HAK/KUP transporter (TC 2.A.72) family.

It localises to the cell inner membrane. It catalyses the reaction K(+)(in) + H(+)(in) = K(+)(out) + H(+)(out). Transport of potassium into the cell. Likely operates as a K(+):H(+) symporter. In Chromobacterium violaceum (strain ATCC 12472 / DSM 30191 / JCM 1249 / CCUG 213 / NBRC 12614 / NCIMB 9131 / NCTC 9757 / MK), this protein is Probable potassium transport system protein Kup 2.